We begin with the raw amino-acid sequence, 81 residues long: ATP synthase subunit c, chloroplastic (81 aa).

Helical transmembrane passes span alanine 7–glycine 27 and leucine 57–alanine 77.

This sequence belongs to the ATPase C chain family. In terms of assembly, F-type ATPases have 2 components, F(1) - the catalytic core - and F(0) - the membrane proton channel. F(1) has five subunits: alpha(3), beta(3), gamma(1), delta(1), epsilon(1). F(0) has four main subunits: a(1), b(1), b'(1) and c(10-14). The alpha and beta chains form an alternating ring which encloses part of the gamma chain. F(1) is attached to F(0) by a central stalk formed by the gamma and epsilon chains, while a peripheral stalk is formed by the delta, b and b' chains.

It localises to the plastid. The protein localises to the chloroplast thylakoid membrane. Its function is as follows. F(1)F(0) ATP synthase produces ATP from ADP in the presence of a proton or sodium gradient. F-type ATPases consist of two structural domains, F(1) containing the extramembraneous catalytic core and F(0) containing the membrane proton channel, linked together by a central stalk and a peripheral stalk. During catalysis, ATP synthesis in the catalytic domain of F(1) is coupled via a rotary mechanism of the central stalk subunits to proton translocation. In terms of biological role, key component of the F(0) channel; it plays a direct role in translocation across the membrane. A homomeric c-ring of between 10-14 subunits forms the central stalk rotor element with the F(1) delta and epsilon subunits. This Staurastrum punctulatum (Green alga) protein is ATP synthase subunit c, chloroplastic.